A 207-amino-acid chain; its full sequence is SPRY domain-containing protein 4 (207 aa).

A B30.2/SPRY domain is found at 12–207; the sequence is YRWGTKRWGV…HSGLEVPKGL (196 aa). Residues Lys-53 and Lys-130 each carry the N6-acetyllysine modification. Lys-139 carries the N6-succinyllysine modification.

The protein is SPRY domain-containing protein 4 (Spryd4) of Mus musculus (Mouse).